Reading from the N-terminus, the 198-residue chain is tRNA (pseudouridine(54)-N(1))-methyltransferase (198 aa).

S-adenosyl-L-methionine is bound at residue leucine 128.

Belongs to the methyltransferase superfamily. TrmY family. As to quaternary structure, homodimer.

Its subcellular location is the cytoplasm. The enzyme catalyses pseudouridine(54) in tRNA + S-adenosyl-L-methionine = N(1)-methylpseudouridine(54) in tRNA + S-adenosyl-L-homocysteine + H(+). In terms of biological role, specifically catalyzes the N1-methylation of pseudouridine at position 54 (Psi54) in tRNAs. This Natronomonas pharaonis (strain ATCC 35678 / DSM 2160 / CIP 103997 / JCM 8858 / NBRC 14720 / NCIMB 2260 / Gabara) (Halobacterium pharaonis) protein is tRNA (pseudouridine(54)-N(1))-methyltransferase.